The primary structure comprises 1046 residues: UDP-N-acetylglucosamine--peptide N-acetylglucosaminyltransferase 110 kDa subunit (1046 aa).

A2 is subject to N-acetylalanine. S3 and S4 each carry phosphoserine; by GSK3-beta; alternate. O-linked (GlcNAc) serine; alternate glycosylation is found at S3 and S4. O-linked (GlcNAc) serine glycosylation occurs at D10. T12 carries an O-linked (GlcNAc) threonine glycan. M18 carries O-linked (GlcNAc) serine glycosylation. S20 bears the Phosphoserine mark. A TPR 1 repeat occupies 21–54 (FQGLAELAHREYQAGDFEAAERHCMQLWRQEPDN). E38 carries an O-linked (GlcNAc) threonine glycan. P52 and G56 each carry an O-linked (GlcNAc) serine glycan. TPR repeat units lie at residues 89-122 (AEAYSNLGNVYKERGQLQEAIEHYRHALRLKPDF), 123-156 (IDGYINLAAALVAAGDMEGAVQAYVSALQYNPDL), 157-190 (YCVRSDLGNLLKALGRLEEAKACYLKAIETQPNF), 191-224 (AVAWSNLGCVFNAQGEIWLAIHHFEKAVTLDPNF), 225-258 (LDAYINLGNVLKEARIFDRAVAAYLRALSLSPNH), 259-292 (AVVHGNLACVYYEQGLIDLAIDTYRRAIELQPHF), 293-326 (PDAYCNLANALKEKGSVAEAEDCYNTALRLCPTH), 327-360 (ADSLNNLANIKREQGNIEEAVRLYRKALEVFPEF), 361-394 (AAAHSNLASVLQQQGKLQEALMHYKEAIRISPTF), 395-428 (ADAYSNMGNTLKEMQDVQGALQCYTRAIQINPAF), and 429-462 (ADAHSNLASIHKDSGNIPEAIASYRTALKLKPDF). S399 is a glycosylation site (O-linked (GlcNAc) serine; by autocatalysis). T454 is modified (phosphothreonine; by AMPK). A TPR 13; truncated repeat occupies 463-473 (PDAYCNLAHCL). The short motif at 464-466 (DAY) is the DFP motif element. The Nuclear localization signal motif lies at 487 to 503 (KKLVSIVADQLEKNRLP). Catalysis depends on H508, which acts as the Proton acceptor. UDP-binding positions include Q849, K852, 906-908 (APK), 911-914 (HVRR), 930-932 (HTT), and D935. Y989 bears the Phosphotyrosine mark. Positions 991 to 1010 (KKVRGKVWKQRISSPLFNTK) are required for phosphatidylinositol 3,4,5-triphosphate binding.

Belongs to the glycosyltransferase 41 family. O-GlcNAc transferase subfamily. Monomer; may exist in different oligomerization states in cells. Homotrimer, oligomerizes via TPR repeats 6 and 7. Trimerization is not necessary for activity in vitro, however it increases affinity for UDP-GlcNAc. Component of a THAP1/THAP3-HCFC1-OGT complex. Component of the NSL complex at least composed of MOF/KAT8, KANSL1, KANSL2, KANSL3, MCRS1, PHF20, OGT1/OGT, WDR5 and HCFC1. Found in a complex with KIF5B, RHOT1, RHOT2 and TRAK1. Found in a complex composed of at least SINHCAF, SIN3A, HDAC1, SAP30, RBBP4, OGT and TET1. Component of a complex composed of KMT2E/MLL5 (isoform 3), OGT (isoform 1) and USP7; the complex stabilizes KMT2E/MLL5, preventing KMT2E/MLL5 ubiquitination and proteasomal-mediated degradation. Interacts (via TPRs 1-6) with SIN3A; the interaction mediates transcriptional repression in parallel with histone deacetylase. Interacts (via TPR 5-6) with TET1, TET2 and TET3. Interacts (via TPR repeats 6 and 7) with ATXN10. Interacts with NSD2. Interacts with PROSER1; this interaction mediates TET2 O-GlcNAcylation and stability by promoting the interaction between OGT and TET2. As to quaternary structure, interacts with USP7. In terms of assembly, (Microbial infection) Interacts with human T-cell leukemia virus 1/HTLV-1 protein Tax; this interaction increases Tax interacting partner CREB1 O-GlcNAcylation. Post-translationally, ubiquitinated by the SCF(FBXO31) complex, leading to its proteasomal degradation. Phosphorylation on Ser-3 or Ser-4 by GSK3-beta positively regulates its activity. Phosphorylation at Thr-454 by AMPK promotes nuclear localization. In terms of processing, glycosylated via autocatalysis; O-GlcNAcylation at Ser-399 promotes nuclear localization. Post-translationally, glycosylated via autocatalysis; does not affect the enzyme activity but regulates substrate selectivity. Highly expressed in pancreas and to a lesser extent in skeletal muscle, heart, brain and placenta. Present in trace amounts in lung and liver.

Its subcellular location is the nucleus. It localises to the cytoplasm. It is found in the mitochondrion. The protein resides in the membrane. The protein localises to the cell membrane. Its subcellular location is the mitochondrion membrane. It localises to the cell projection. The enzyme catalyses L-seryl-[protein] + UDP-N-acetyl-alpha-D-glucosamine = 3-O-(N-acetyl-beta-D-glucosaminyl)-L-seryl-[protein] + UDP + H(+). The catalysed reaction is L-threonyl-[protein] + UDP-N-acetyl-alpha-D-glucosamine = 3-O-(N-acetyl-beta-D-glucosaminyl)-L-threonyl-[protein] + UDP + H(+). It participates in protein modification; protein glycosylation. Subject to product inhibition by UDP. Functionally, catalyzes the transfer of a single N-acetylglucosamine from UDP-GlcNAc to a serine or threonine residue in cytoplasmic and nuclear proteins resulting in their modification with a beta-linked N-acetylglucosamine (O-GlcNAc). Glycosylates a large and diverse number of proteins including histone H2B, AKT1, AMPK, ATG4B, CAPRIN1, EZH2, FNIP1, GSDMD, KRT7, LMNA, LMNB1, LMNB2, RPTOR, HOXA1, PFKL, KMT2E/MLL5, MAPT/TAU, TET2, RBL2, RET, NOD2 and HCFC1. Can regulate their cellular processes via cross-talk between glycosylation and phosphorylation or by affecting proteolytic processing. Involved in insulin resistance in muscle and adipocyte cells via glycosylating insulin signaling components and inhibiting the 'Thr-308' phosphorylation of AKT1, enhancing IRS1 phosphorylation and attenuating insulin signaling. Involved in glycolysis regulation by mediating glycosylation of 6-phosphofructokinase PFKL, inhibiting its activity. Plays a key role in chromatin structure by mediating O-GlcNAcylation of 'Ser-112' of histone H2B: recruited to CpG-rich transcription start sites of active genes via its interaction with TET proteins (TET1, TET2 or TET3). As part of the NSL complex indirectly involved in acetylation of nucleosomal histone H4 on several lysine residues. O-GlcNAcylation of 'Ser-75' of EZH2 increases its stability, and facilitating the formation of H3K27me3 by the PRC2/EED-EZH2 complex. Stabilizes KMT2E/MLL5 by mediating its glycosylation, thereby preventing KMT2E/MLL5 ubiquitination. Regulates circadian oscillation of the clock genes and glucose homeostasis in the liver. Stabilizes clock proteins BMAL1 and CLOCK through O-glycosylation, which prevents their ubiquitination and subsequent degradation. Promotes the CLOCK-BMAL1-mediated transcription of genes in the negative loop of the circadian clock such as PER1/2 and CRY1/2. O-glycosylates HCFC1 and regulates its proteolytic processing and transcriptional activity. Component of a THAP1/THAP3-HCFC1-OGT complex that is required for the regulation of the transcriptional activity of RRM1. Regulates mitochondrial motility in neurons by mediating glycosylation of TRAK1. Promotes autophagy by mediating O-glycosylation of ATG4B. Acts as a regulator of mTORC1 signaling by mediating O-glycosylation of RPTOR and FNIP1: O-GlcNAcylation of RPTOR in response to glucose sufficiency promotes activation of the mTORC1 complex. The mitochondrial isoform (mOGT) is cytotoxic and triggers apoptosis in several cell types including INS1, an insulinoma cell line. In terms of biological role, has N-acetylglucosaminyltransferase activity: glycosylates proteins, such as HNRNPU, NEUROD1, NUP62 and PDCD6IP. Displays specific substrate selectivity compared to other isoforms. This Homo sapiens (Human) protein is UDP-N-acetylglucosamine--peptide N-acetylglucosaminyltransferase 110 kDa subunit.